We begin with the raw amino-acid sequence, 379 residues long: S-adenosylmethionine:tRNA ribosyltransferase-isomerase (379 aa).

Residues 35-58 are disordered; the sequence is AESRPHAESVPHAESRPHAESAFS.

It belongs to the QueA family. Monomer.

It localises to the cytoplasm. The enzyme catalyses 7-aminomethyl-7-carbaguanosine(34) in tRNA + S-adenosyl-L-methionine = epoxyqueuosine(34) in tRNA + adenine + L-methionine + 2 H(+). The protein operates within tRNA modification; tRNA-queuosine biosynthesis. Its function is as follows. Transfers and isomerizes the ribose moiety from AdoMet to the 7-aminomethyl group of 7-deazaguanine (preQ1-tRNA) to give epoxyqueuosine (oQ-tRNA). This Rhizobium leguminosarum bv. trifolii (strain WSM2304) protein is S-adenosylmethionine:tRNA ribosyltransferase-isomerase.